A 438-amino-acid polypeptide reads, in one-letter code: Xylose isomerase (438 aa).

Residues His-103 and Asp-106 contribute to the active site. 7 residues coordinate Mg(2+): Glu-234, Glu-270, His-273, Asp-298, Asp-309, Asp-311, and Asp-341.

The protein belongs to the xylose isomerase family. Homotetramer. Requires Mg(2+) as cofactor.

It localises to the cytoplasm. The catalysed reaction is alpha-D-xylose = alpha-D-xylulofuranose. The chain is Xylose isomerase from Bacteroides thetaiotaomicron (strain ATCC 29148 / DSM 2079 / JCM 5827 / CCUG 10774 / NCTC 10582 / VPI-5482 / E50).